Reading from the N-terminus, the 62-residue chain is Photosystem II reaction center protein Z (62 aa).

A run of 2 helical transmembrane segments spans residues alanine 8–alanine 28 and phenylalanine 41–isoleucine 61.

The protein belongs to the PsbZ family. PSII is composed of 1 copy each of membrane proteins PsbA, PsbB, PsbC, PsbD, PsbE, PsbF, PsbH, PsbI, PsbJ, PsbK, PsbL, PsbM, PsbT, PsbY, PsbZ, Psb30/Ycf12, at least 3 peripheral proteins of the oxygen-evolving complex and a large number of cofactors. It forms dimeric complexes.

The protein resides in the plastid. Its subcellular location is the chloroplast thylakoid membrane. Functionally, may control the interaction of photosystem II (PSII) cores with the light-harvesting antenna, regulates electron flow through the 2 photosystem reaction centers. PSII is a light-driven water plastoquinone oxidoreductase, using light energy to abstract electrons from H(2)O, generating a proton gradient subsequently used for ATP formation. The polypeptide is Photosystem II reaction center protein Z (Citrus sinensis (Sweet orange)).